Here is a 689-residue protein sequence, read N- to C-terminus: Acetyl-coenzyme A synthetase 2-like, mitochondrial (689 aa).

The transit peptide at methionine 1–alanine 37 directs the protein to the mitochondrion. A disordered region spans residues leucine 17–proline 46. Residues serine 32–proline 46 are compositionally biased toward low complexity. Residues arginine 224–arginine 227 and threonine 341 contribute to the CoA site. Position 396 is an N6-acetyllysine (lysine 396). Residues glycine 417–proline 419, aspartate 441–threonine 446, aspartate 533, and arginine 548 each bind ATP. Position 556 (serine 556) interacts with CoA. Arginine 559 contributes to the ATP binding site. Lysine 642 bears the N6-acetyllysine mark.

The protein belongs to the ATP-dependent AMP-binding enzyme family. Interacts with SIRT3. Reversibly acetylated on Lys-642. The acetyl-CoA synthase activity is inhibited by acetylation and activated by deacetylation mediated by the deacetylase SIRT3.

Its subcellular location is the mitochondrion matrix. The enzyme catalyses acetate + ATP + CoA = acetyl-CoA + AMP + diphosphate. The catalysed reaction is propanoate + ATP + CoA = propanoyl-CoA + AMP + diphosphate. With respect to regulation, inhibited by acetylation at Lys-642 and activated by deacetylation mediated by the deacetylase SIRT3. In terms of biological role, catalyzes the synthesis of acetyl-CoA from short-chain fatty acids. Acetate is the preferred substrate. Can also utilize propionate with a much lower affinity. Provides acetyl-CoA that is utilized mainly for oxidation under ketogenic conditions. Involved in thermogenesis under ketogenic conditions, using acetate as a vital fuel when carbohydrate availability is insufficient. This Homo sapiens (Human) protein is Acetyl-coenzyme A synthetase 2-like, mitochondrial (ACSS1).